The primary structure comprises 175 residues: NADH-ubiquinone oxidoreductase chain 6 (175 aa).

Transmembrane regions (helical) follow at residues 1-21 (MVTY…VGVS), 25-45 (SPIY…GVVL), 47-67 (FGGS…MLVV), 88-108 (VVLG…IYAL), and 149-169 (YGVW…VIIM).

This sequence belongs to the complex I subunit 6 family. As to quaternary structure, core subunit of respiratory chain NADH dehydrogenase (Complex I) which is composed of 45 different subunits.

It is found in the mitochondrion inner membrane. The enzyme catalyses a ubiquinone + NADH + 5 H(+)(in) = a ubiquinol + NAD(+) + 4 H(+)(out). Its function is as follows. Core subunit of the mitochondrial membrane respiratory chain NADH dehydrogenase (Complex I) which catalyzes electron transfer from NADH through the respiratory chain, using ubiquinone as an electron acceptor. Essential for the catalytic activity and assembly of complex I. This chain is NADH-ubiquinone oxidoreductase chain 6 (MT-ND6), found in Balaenoptera musculus (Blue whale).